Consider the following 348-residue polypeptide: Dihydroorotase (348 aa).

Positions 17 and 19 each coordinate Zn(2+). Substrate contacts are provided by residues 19–21 (HLR) and asparagine 45. 3 residues coordinate Zn(2+): lysine 103, histidine 140, and histidine 178. At lysine 103 the chain carries N6-carboxylysine. Histidine 140 contributes to the substrate binding site. Leucine 223 contributes to the substrate binding site. A Zn(2+)-binding site is contributed by aspartate 251. Aspartate 251 is a catalytic residue. The substrate site is built by histidine 255 and alanine 267.

Belongs to the metallo-dependent hydrolases superfamily. DHOase family. Class II DHOase subfamily. Homodimer. It depends on Zn(2+) as a cofactor.

The enzyme catalyses (S)-dihydroorotate + H2O = N-carbamoyl-L-aspartate + H(+). It functions in the pathway pyrimidine metabolism; UMP biosynthesis via de novo pathway; (S)-dihydroorotate from bicarbonate: step 3/3. In terms of biological role, catalyzes the reversible cyclization of carbamoyl aspartate to dihydroorotate. This Escherichia coli O139:H28 (strain E24377A / ETEC) protein is Dihydroorotase.